Consider the following 599-residue polypeptide: Elongation factor 4 (599 aa).

A tr-type G domain is found at 2-184 (KHIRNFSIIA…RLVRDIPPPE (183 aa)). GTP contacts are provided by residues 14–19 (DHGKST) and 131–134 (NKID).

Belongs to the TRAFAC class translation factor GTPase superfamily. Classic translation factor GTPase family. LepA subfamily.

The protein resides in the cell inner membrane. The enzyme catalyses GTP + H2O = GDP + phosphate + H(+). In terms of biological role, required for accurate and efficient protein synthesis under certain stress conditions. May act as a fidelity factor of the translation reaction, by catalyzing a one-codon backward translocation of tRNAs on improperly translocated ribosomes. Back-translocation proceeds from a post-translocation (POST) complex to a pre-translocation (PRE) complex, thus giving elongation factor G a second chance to translocate the tRNAs correctly. Binds to ribosomes in a GTP-dependent manner. The protein is Elongation factor 4 of Erwinia tasmaniensis (strain DSM 17950 / CFBP 7177 / CIP 109463 / NCPPB 4357 / Et1/99).